Consider the following 82-residue polypeptide: UPF0213 protein SH2523 (82 aa).

In terms of domain architecture, GIY-YIG spans 2 to 77 (AKHYVYIVKC…KTFSRQQKLK (76 aa)).

This sequence belongs to the UPF0213 family.

The protein is UPF0213 protein SH2523 of Staphylococcus haemolyticus (strain JCSC1435).